Reading from the N-terminus, the 144-residue chain is Cytochrome c oxidase subunit 4 isoform 1, mitochondrial (144 aa).

Residues 1-73 lie on the Mitochondrial matrix side of the membrane; it reads SVVKSEDFSL…SFAEMNRGSN (73 aa). The residue at position 4 (K4) is an N6-acetyllysine; alternate. The residue at position 4 (K4) is an N6-succinyllysine; alternate. N6-acetyllysine is present on K28. Phosphoserine is present on residues S31 and S33. At K35 the chain carries N6-acetyllysine; alternate. N6-succinyllysine; alternate is present on K35. The residue at position 42 (K42) is an N6-acetyllysine. Residues 74-99 form a helical membrane-spanning segment; that stretch reads EWKTVVGGAMFFIGFTALIIMWQKHY. Residues 100 to 144 lie on the Mitochondrial intermembrane side of the membrane; that stretch reads VYGPLPQTFDKEWVGKQTKRMLDMKVNPIQGLASKWDYEKNEWKK.

It belongs to the cytochrome c oxidase IV family. As to quaternary structure, component of the cytochrome c oxidase (complex IV, CIV), a multisubunit enzyme composed of 14 subunits. The complex is composed of a catalytic core of 3 subunits MT-CO1, MT-CO2 and MT-CO3, encoded in the mitochondrial DNA, and 11 supernumerary subunits COX4I, COX5A, COX5B, COX6A, COX6B, COX6C, COX7A, COX7B, COX7C, COX8 and NDUFA4, which are encoded in the nuclear genome. The complex exists as a monomer or a dimer and forms supercomplexes (SCs) in the inner mitochondrial membrane with NADH-ubiquinone oxidoreductase (complex I, CI) and ubiquinol-cytochrome c oxidoreductase (cytochrome b-c1 complex, complex III, CIII), resulting in different assemblies (supercomplex SCI(1)III(2)IV(1) and megacomplex MCI(2)III(2)IV(2)). Interacts with PHB2; the interaction decreases in absence of SPHK2. Interacts with AFG1L. Interacts with ABCB7; this interaction allows the regulation of cellular iron homeostasis and cellular reactive oxygen species (ROS) levels in cardiomyocytes. Interacts with FLVCR2; this interaction occurs in the absence of heme and is disrupted upon heme binding. Interacts with IRGC.

The protein localises to the mitochondrion inner membrane. It functions in the pathway energy metabolism; oxidative phosphorylation. Component of the cytochrome c oxidase, the last enzyme in the mitochondrial electron transport chain which drives oxidative phosphorylation. The respiratory chain contains 3 multisubunit complexes succinate dehydrogenase (complex II, CII), ubiquinol-cytochrome c oxidoreductase (cytochrome b-c1 complex, complex III, CIII) and cytochrome c oxidase (complex IV, CIV), that cooperate to transfer electrons derived from NADH and succinate to molecular oxygen, creating an electrochemical gradient over the inner membrane that drives transmembrane transport and the ATP synthase. Cytochrome c oxidase is the component of the respiratory chain that catalyzes the reduction of oxygen to water. Electrons originating from reduced cytochrome c in the intermembrane space (IMS) are transferred via the dinuclear copper A center (CU(A)) of subunit 2 and heme A of subunit 1 to the active site in subunit 1, a binuclear center (BNC) formed by heme A3 and copper B (CU(B)). The BNC reduces molecular oxygen to 2 water molecules using 4 electrons from cytochrome c in the IMS and 4 protons from the mitochondrial matrix. The sequence is that of Cytochrome c oxidase subunit 4 isoform 1, mitochondrial (COX4I1) from Hylobates agilis (Agile gibbon).